Here is a 174-residue protein sequence, read N- to C-terminus: Large ribosomal subunit protein uL6 (174 aa).

This sequence belongs to the universal ribosomal protein uL6 family. As to quaternary structure, part of the 50S ribosomal subunit.

In terms of biological role, this protein binds to the 23S rRNA, and is important in its secondary structure. It is located near the subunit interface in the base of the L7/L12 stalk, and near the tRNA binding site of the peptidyltransferase center. The protein is Large ribosomal subunit protein uL6 of Acidithiobacillus ferrooxidans (strain ATCC 23270 / DSM 14882 / CIP 104768 / NCIMB 8455) (Ferrobacillus ferrooxidans (strain ATCC 23270)).